Here is a 319-residue protein sequence, read N- to C-terminus: Acetyl-coenzyme A carboxylase carboxyl transferase subunit alpha (319 aa).

The region spanning Asp-35–Asp-296 is the CoA carboxyltransferase C-terminal domain.

This sequence belongs to the AccA family. Acetyl-CoA carboxylase is a heterohexamer composed of biotin carboxyl carrier protein (AccB), biotin carboxylase (AccC) and two subunits each of ACCase subunit alpha (AccA) and ACCase subunit beta (AccD).

It localises to the cytoplasm. The catalysed reaction is N(6)-carboxybiotinyl-L-lysyl-[protein] + acetyl-CoA = N(6)-biotinyl-L-lysyl-[protein] + malonyl-CoA. It functions in the pathway lipid metabolism; malonyl-CoA biosynthesis; malonyl-CoA from acetyl-CoA: step 1/1. In terms of biological role, component of the acetyl coenzyme A carboxylase (ACC) complex. First, biotin carboxylase catalyzes the carboxylation of biotin on its carrier protein (BCCP) and then the CO(2) group is transferred by the carboxyltransferase to acetyl-CoA to form malonyl-CoA. The chain is Acetyl-coenzyme A carboxylase carboxyl transferase subunit alpha from Vibrio cholerae serotype O1 (strain ATCC 39541 / Classical Ogawa 395 / O395).